Reading from the N-terminus, the 194-residue chain is Imidazoleglycerol-phosphate dehydratase (194 aa).

The protein belongs to the imidazoleglycerol-phosphate dehydratase family.

The protein localises to the cytoplasm. The enzyme catalyses D-erythro-1-(imidazol-4-yl)glycerol 3-phosphate = 3-(imidazol-4-yl)-2-oxopropyl phosphate + H2O. The protein operates within amino-acid biosynthesis; L-histidine biosynthesis; L-histidine from 5-phospho-alpha-D-ribose 1-diphosphate: step 6/9. This is Imidazoleglycerol-phosphate dehydratase from Lacticaseibacillus paracasei (strain ATCC 334 / BCRC 17002 / CCUG 31169 / CIP 107868 / KCTC 3260 / NRRL B-441) (Lactobacillus paracasei).